Here is a 400-residue protein sequence, read N- to C-terminus: Acetate kinase (400 aa).

Residue Asn-10 participates in Mg(2+) binding. Lys-17 provides a ligand contact to ATP. Arg-89 contacts substrate. Catalysis depends on Asp-148, which acts as the Proton donor/acceptor. Residues 208–212 (HLGNG), 283–285 (DCR), and 331–335 (GIGEN) contribute to the ATP site. Residue Glu-385 participates in Mg(2+) binding.

It belongs to the acetokinase family. In terms of assembly, homodimer. The cofactor is Mg(2+). Requires Mn(2+) as cofactor.

Its subcellular location is the cytoplasm. The catalysed reaction is acetate + ATP = acetyl phosphate + ADP. The protein operates within metabolic intermediate biosynthesis; acetyl-CoA biosynthesis; acetyl-CoA from acetate: step 1/2. Functionally, catalyzes the formation of acetyl phosphate from acetate and ATP. Can also catalyze the reverse reaction. This is Acetate kinase from Haemophilus ducreyi (strain 35000HP / ATCC 700724).